The primary structure comprises 1024 residues: Translation initiation factor IF-2 (1024 aa).

The interval S33 to K425 is disordered. Composition is skewed to basic and acidic residues over residues E43–V62, T135–P148, T167–S198, and S223–R263. The segment covering E316 to Q325 has biased composition (polar residues). A compositionally biased stretch (basic and acidic residues) spans K332–R350. The span at R365 to G375 shows a compositional bias: basic residues. Residues S394–R406 show a composition bias toward basic and acidic residues. Positions S407–T423 are enriched in basic residues. In terms of domain architecture, tr-type G spans S518–K687. The G1 stretch occupies residues G527–T534. GTP is bound at residue G527–T534. The tract at residues G552–H556 is G2. A G3 region spans residues D573–G576. GTP-binding positions include D573–H577 and N627–D630. Residues N627–D630 are G4. The G5 stretch occupies residues S663–K665.

This sequence belongs to the TRAFAC class translation factor GTPase superfamily. Classic translation factor GTPase family. IF-2 subfamily.

The protein localises to the cytoplasm. Its function is as follows. One of the essential components for the initiation of protein synthesis. Protects formylmethionyl-tRNA from spontaneous hydrolysis and promotes its binding to the 30S ribosomal subunits. Also involved in the hydrolysis of GTP during the formation of the 70S ribosomal complex. This is Translation initiation factor IF-2 from Desulforapulum autotrophicum (strain ATCC 43914 / DSM 3382 / VKM B-1955 / HRM2) (Desulfobacterium autotrophicum).